Here is a 211-residue protein sequence, read N- to C-terminus: Urease accessory protein UreG (211 aa).

Residue 11 to 18 participates in GTP binding; that stretch reads GPVGAGKT.

This sequence belongs to the SIMIBI class G3E GTPase family. UreG subfamily. As to quaternary structure, homodimer. UreD, UreF and UreG form a complex that acts as a GTP-hydrolysis-dependent molecular chaperone, activating the urease apoprotein by helping to assemble the nickel containing metallocenter of UreC. The UreE protein probably delivers the nickel.

Its subcellular location is the cytoplasm. Facilitates the functional incorporation of the urease nickel metallocenter. This process requires GTP hydrolysis, probably effectuated by UreG. This Actinobacillus pleuropneumoniae (Haemophilus pleuropneumoniae) protein is Urease accessory protein UreG.